The chain runs to 95 residues: Co-chaperonin GroES (95 aa).

It belongs to the GroES chaperonin family. Heptamer of 7 subunits arranged in a ring. Interacts with the chaperonin GroEL.

It localises to the cytoplasm. Together with the chaperonin GroEL, plays an essential role in assisting protein folding. The GroEL-GroES system forms a nano-cage that allows encapsulation of the non-native substrate proteins and provides a physical environment optimized to promote and accelerate protein folding. GroES binds to the apical surface of the GroEL ring, thereby capping the opening of the GroEL channel. In Xanthomonas axonopodis pv. citri (strain 306), this protein is Co-chaperonin GroES.